Consider the following 416-residue polypeptide: Phosphoribosylamine--glycine ligase (416 aa).

The ATP-grasp domain occupies 107–313 (KDFMKKYNVK…FVDLINAAMD (207 aa)). 133–194 (LKKCTYPIVI…EEYLEGVEAS (62 aa)) contacts ATP. Mg(2+) is bound by residues Glu-283 and Asn-285.

This sequence belongs to the GARS family. Mg(2+) serves as cofactor. Requires Mn(2+) as cofactor.

It catalyses the reaction 5-phospho-beta-D-ribosylamine + glycine + ATP = N(1)-(5-phospho-beta-D-ribosyl)glycinamide + ADP + phosphate + H(+). Its pathway is purine metabolism; IMP biosynthesis via de novo pathway; N(1)-(5-phospho-D-ribosyl)glycinamide from 5-phospho-alpha-D-ribose 1-diphosphate: step 2/2. The sequence is that of Phosphoribosylamine--glycine ligase from Clostridium acetobutylicum (strain ATCC 824 / DSM 792 / JCM 1419 / IAM 19013 / LMG 5710 / NBRC 13948 / NRRL B-527 / VKM B-1787 / 2291 / W).